Here is a 328-residue protein sequence, read N- to C-terminus: Diaminopimelate epimerase (328 aa).

2 residues coordinate substrate: N14 and N73. C82 functions as the Proton donor in the catalytic mechanism. Substrate contacts are provided by residues G83–N84, N170, N206, and E224–R225. The active-site Proton acceptor is C233. G234–T235 contacts substrate.

The protein belongs to the diaminopimelate epimerase family. In terms of assembly, homodimer.

The protein resides in the cytoplasm. It carries out the reaction (2S,6S)-2,6-diaminopimelate = meso-2,6-diaminopimelate. Its pathway is amino-acid biosynthesis; L-lysine biosynthesis via DAP pathway; DL-2,6-diaminopimelate from LL-2,6-diaminopimelate: step 1/1. Functionally, catalyzes the stereoinversion of LL-2,6-diaminopimelate (L,L-DAP) to meso-diaminopimelate (meso-DAP), a precursor of L-lysine and an essential component of the bacterial peptidoglycan. The chain is Diaminopimelate epimerase from Listeria welshimeri serovar 6b (strain ATCC 35897 / DSM 20650 / CCUG 15529 / CIP 8149 / NCTC 11857 / SLCC 5334 / V8).